Reading from the N-terminus, the 105-residue chain is Putative RNA-binding protein RbpF (105 aa).

An RRM domain is found at 2–79 (SIYVGNLSYE…RDLKVNKAKP (78 aa)). Over residues 75–84 (NKAKPKEDRG) the composition is skewed to basic and acidic residues. Positions 75–105 (NKAKPKEDRGSFGGGNRGGYGGGGGGGRSRY) are disordered. The segment covering 85–105 (SFGGGNRGGYGGGGGGGRSRY) has biased composition (gly residues).

The polypeptide is Putative RNA-binding protein RbpF (rbpF) (Nostoc sp. (strain PCC 7120 / SAG 25.82 / UTEX 2576)).